Here is a 265-residue protein sequence, read N- to C-terminus: Inositol-1-monophosphatase (265 aa).

4 residues coordinate Mg(2+): Glu-69, Asp-87, Ile-89, and Asp-90. Glu-69 contributes to the substrate binding site. Residues 89–92, Arg-185, and Asp-214 each bind substrate; that span reads IDGT. Asp-214 serves as a coordination point for Mg(2+).

Belongs to the inositol monophosphatase superfamily. It depends on Mg(2+) as a cofactor.

It catalyses the reaction a myo-inositol phosphate + H2O = myo-inositol + phosphate. The enzyme catalyses a ribonucleoside 5'-phosphate + H2O = a ribonucleoside + phosphate. Functionally, hydrolyzes myo-inositol monophosphate. Catalyzes the dephosphorylation of GMP and IMP. This chain is Inositol-1-monophosphatase, found in Bacillus subtilis (strain 168).